The following is a 479-amino-acid chain: Trigger factor (479 aa).

Residues 174–261 enclose the PPIase FKBP-type domain; it reads GDIAVVSFSG…LKELKTRELP (88 aa). A disordered region spans residues 438 to 479; it reads VLESEAKTSKPAAKSKGSKTKSTKTKTNKANTEKPASDKSKS. Residues 453–464 show a composition bias toward basic residues; sequence KGSKTKSTKTKT. The span at 468-479 shows a compositional bias: basic and acidic residues; sequence NTEKPASDKSKS.

The protein belongs to the FKBP-type PPIase family. Tig subfamily.

The protein localises to the cytoplasm. The catalysed reaction is [protein]-peptidylproline (omega=180) = [protein]-peptidylproline (omega=0). Its function is as follows. Involved in protein export. Acts as a chaperone by maintaining the newly synthesized protein in an open conformation. Functions as a peptidyl-prolyl cis-trans isomerase. The sequence is that of Trigger factor from Prochlorococcus marinus (strain MIT 9313).